The primary structure comprises 328 residues: P2Y purinoceptor 6 (328 aa).

The Extracellular portion of the chain corresponds to 1–27 (MEWDNGTGQALGLPPTTCVYRENFKQL). A glycan (N-linked (GlcNAc...) asparagine) is linked at N5. A helical membrane pass occupies residues 28–48 (LLPPVYSAVLAAGLPLNICVI). At 49–62 (TQICTSRRALTRTA) the chain is on the cytoplasmic side. The helical transmembrane segment at 63 to 83 (VYTLNLALADLLYACSLPLLI) threads the bilayer. The Extracellular portion of the chain corresponds to 84–101 (YNYAQGDHWPFGDFACRL). C99 and C177 form a disulfide bridge. A helical membrane pass occupies residues 102–122 (VRFLFYANLHGSILFLTCISF). The Cytoplasmic portion of the chain corresponds to 123-144 (QRYLGICHPLAPWHKRGGRRAA). A helical membrane pass occupies residues 145-165 (WLVCVAVWLAVTTQCLPTAIF). At 166–194 (AATGIQRNRTVCYDLSPPALATHYMPYGM) the chain is on the extracellular side. The helical transmembrane segment at 195–215 (ALTVIGFLLPFAALLACYCLL) threads the bilayer. Topologically, residues 216-236 (ACRLCRQDGPAEPVAQERRGK) are cytoplasmic. A helical membrane pass occupies residues 237 to 257 (AARMAVVVAAAFAISFLPFHI). Over 258–280 (TKTAYLAVRSTPGVPCTVLEAFA) the chain is Extracellular. The chain crosses the membrane as a helical span at residues 281–303 (AAYKGTRPFASANSVLDPILFYF). At 304–328 (TQKKFRRRPHELLQKLTAKWQRQGR) the chain is on the cytoplasmic side.

It belongs to the G-protein coupled receptor 1 family.

Its subcellular location is the cell membrane. Functionally, receptor for extracellular UDP &gt; UTP &gt; ATP. The activity of this receptor is mediated by G proteins which activate a phosphatidylinositol-calcium second messenger system. In Homo sapiens (Human), this protein is P2Y purinoceptor 6 (P2RY6).